The primary structure comprises 297 residues: Phosphoribosylaminoimidazole-succinocarboxamide synthase (297 aa).

This sequence belongs to the SAICAR synthetase family.

The catalysed reaction is 5-amino-1-(5-phospho-D-ribosyl)imidazole-4-carboxylate + L-aspartate + ATP = (2S)-2-[5-amino-1-(5-phospho-beta-D-ribosyl)imidazole-4-carboxamido]succinate + ADP + phosphate + 2 H(+). The protein operates within purine metabolism; IMP biosynthesis via de novo pathway; 5-amino-1-(5-phospho-D-ribosyl)imidazole-4-carboxamide from 5-amino-1-(5-phospho-D-ribosyl)imidazole-4-carboxylate: step 1/2. This is Phosphoribosylaminoimidazole-succinocarboxamide synthase from Corynebacterium diphtheriae (strain ATCC 700971 / NCTC 13129 / Biotype gravis).